The chain runs to 202 residues: B-cell CLL/lymphoma 7 protein family member B (202 aa).

The segment at 53–202 is disordered; sequence DSKEKEKSKS…PVVPQTTSES (150 aa). Residues 90–99 show a composition bias toward polar residues; that stretch reads ENSNQSSVSD. The segment covering 107–123 has biased composition (low complexity); that stretch reads SSTNSSPSPQQSESLSP. Phosphoserine is present on residues serine 114, serine 118, serine 120, serine 122, serine 127, serine 148, and serine 152.

The protein belongs to the BCL7 family.

In terms of biological role, positive regulator of apoptosis. Plays a role in the Wnt signaling pathway, negatively regulating the expression of Wnt signaling components CTNNB1 and HMGA1. Involved in cell cycle progression, maintenance of the nuclear structure and stem cell differentiation. May play a role in lung tumor development or progression. This Mus musculus (Mouse) protein is B-cell CLL/lymphoma 7 protein family member B (Bcl7b).